We begin with the raw amino-acid sequence, 819 residues long: Protein EFR3 homolog A (819 aa).

The tract at residues 210–230 (DTDSRTGPPASPTTGDKEENP) is disordered.

Belongs to the EFR3 family. In terms of assembly, component of a phosphatidylinositol 4-kinase (PI4K) complex. Palmitoylated at its N-terminus, anchoring the protein to the plasma membrane.

The protein localises to the cell membrane. Functionally, component of a complex required to localize phosphatidylinositol 4-kinase (PI4K) to the plasma membrane. The complex acts as a regulator of phosphatidylinositol 4-phosphate (PtdIns(4)P) synthesis. In the complex, efr3a probably acts as the membrane-anchoring component. The polypeptide is Protein EFR3 homolog A (efr3a) (Xenopus laevis (African clawed frog)).